A 1159-amino-acid polypeptide reads, in one-letter code: Reverse gyrase 2 (1159 aa).

Residues 1–40 form an RG N-terminal-type zinc finger; it reads MALELIERGCPNCGGVISSDRLEKGLPCSKCLPKPTEEKV. Zn(2+) contacts are provided by Cys-10, Cys-13, Cys-28, and Cys-31. ATP is bound by residues Gln-82 and 99 to 106; that span reads APTGVGKT. The Helicase ATP-binding domain occupies 86-275; the sequence is AKRVFMNQSF…LFRNLLGFDV (190 aa). Positions 196–199 match the DEAD box motif; sequence DDID. The interval 583–1159 is topoisomerase I; that stretch reads DLFKTTLVIV…LLKEEKAFKK (577 aa). The Toprim domain occupies 587–743; the sequence is TTLVIVESPN…NIKRAEFHEV (157 aa). Positions 593 and 712 each coordinate Mg(2+). Positions 759-1152 constitute a Topo IA-type catalytic domain; it reads DLNLVKAQLV…EVHRIKVLLK (394 aa). Residue Tyr-902 is the O-(5'-phospho-DNA)-tyrosine intermediate of the active site.

This sequence in the N-terminal section; belongs to the DEAD box helicase family. DDVD subfamily. In the C-terminal section; belongs to the type IA topoisomerase family. Monomer. It depends on Zn(2+) as a cofactor. Mg(2+) is required as a cofactor.

Its subcellular location is the cytoplasm. The enzyme catalyses ATP + H2O = ADP + phosphate + H(+). Functionally, modifies the topological state of DNA by introducing positive supercoils in an ATP-dependent process, increasing the linking number in steps of +1. Binds to single-stranded DNA, transiently cleaves and then rejoins the ends, introducing a positive supercoil in the process. The scissile phosphodiester is attacked by the catalytic tyrosine of the enzyme, resulting in the formation of a DNA-(5'-phosphotyrosyl)-enzyme intermediate. Probably involved in rewinding DNA strands in regions of the chromosome that have opened up to allow replication, transcription, DNA repair and/or for DNA protection. The protein is Reverse gyrase 2 of Aquifex aeolicus (strain VF5).